We begin with the raw amino-acid sequence, 352 residues long: fMet-Leu-Phe receptor (352 aa).

The Extracellular portion of the chain corresponds to 1 to 27 (MDSNASLPLNVSGGTQATPAGLVVLDV). Residues Asn-4 and Asn-10 are each glycosylated (N-linked (GlcNAc...) asparagine). The chain crosses the membrane as a helical span at residues 28–50 (FSYLILVVTFVLGVLGNGLVIWV). Over 51–61 (TGFRMTHTVTT) the chain is Cytoplasmic. The helical transmembrane segment at 62 to 83 (ISYLNLALADFSFTSTLPFFIV) threads the bilayer. Topologically, residues 84–100 (TKALGGHWPFGWFLCKF) are extracellular. Cys-98 and Cys-178 are disulfide-bonded. Residues 101-121 (VFTIVDINLFGSVFLIALIAL) traverse the membrane as a helical segment. Residues 122 to 140 (DRCICVLHPVWAQNHRNVS) are Cytoplasmic-facing. A helical transmembrane segment spans residues 141-162 (LAKKVIVGPWICALLLTLPVII). At 163 to 207 (RVTTLSHPRAPGKMACTFDWSPWTEDPAEKLKVAISMFMVRGIIR) the chain is on the extracellular side. The chain crosses the membrane as a helical span at residues 208-228 (FIIGFSTPMSIVAVCYGLIAT). Over 229-244 (KIHRQGLIKSSRPLRV) the chain is Cytoplasmic. The helical transmembrane segment at 245–268 (LSFVVASFLLCWSPYQIAALIATV) threads the bilayer. Topologically, residues 269–287 (RIRELLLGMGKDLRIVLDV) are extracellular. The chain crosses the membrane as a helical span at residues 288–307 (TSFVAFFNSCLNPMLYVFMG). Residues 308 to 352 (QDFRERLIHSLPASLERALSEDSAQTSDTGTNSTSAPAEAELQAI) lie on the Cytoplasmic side of the membrane.

This sequence belongs to the G-protein coupled receptor 1 family. Phosphorylated; which is necessary for desensitization. In terms of tissue distribution, neutrophils.

The protein localises to the cell membrane. High affinity receptor for N-formyl-methionyl peptides (fMLP), which are powerful neutrophil chemotactic factors. Binding of fMLP to the receptor stimulates intracellular calcium mobilization and superoxide anion release. This response is mediated via a G-protein that activates a phosphatidylinositol-calcium second messenger system. Receptor for TAFA4, mediates its effects on chemoattracting macrophages, promoting phagocytosis and increasing ROS release. Receptor for cathepsin CTSG, leading to increased phagocyte chemotaxis. This is fMet-Leu-Phe receptor (FPR1) from Oryctolagus cuniculus (Rabbit).